The sequence spans 139 residues: Putative nickel-responsive regulator (139 aa).

The Ni(2+) site is built by His79, His90, His92, and Cys98.

Belongs to the transcriptional regulatory CopG/NikR family. Ni(2+) is required as a cofactor.

In terms of biological role, transcriptional regulator. The chain is Putative nickel-responsive regulator from Pelobacter propionicus (strain DSM 2379 / NBRC 103807 / OttBd1).